The chain runs to 384 residues: Glucans biosynthesis protein C (384 aa).

Helical transmembrane passes span 17-37 (AWLMLLGIPFHISLIYSTHSW), 54-74 (FIHAFRMQVFFVISGYFSYML), 91-111 (VGIPMLTAIPLLTLPQFILLQ), 140-160 (LWFLLVLVILTTVSIGIFTWF), 173-193 (AISLVRLSLIFFLLGMAYAAI), 212-232 (FIVMQTLFYVPFFILGALAFI), 240-260 (FTTPSRGCTLGAAVAFIAYLL), 274-294 (TESVITMVMGLWMVNVVFSLG), 311-331 (ASLFIYLVHHPLTLFFGAYIT), and 338-358 (LIGFLCGLIFVMGIALILYEI).

This sequence belongs to the acyltransferase 3 family. OpgC subfamily.

It is found in the cell membrane. Its pathway is glycan metabolism; osmoregulated periplasmic glucan (OPG) biosynthesis. In terms of biological role, necessary for the succinyl substitution of periplasmic glucans. Could catalyze the transfer of succinyl residues from the cytoplasmic side of the membrane to the nascent glucan backbones on the periplasmic side of the membrane. This is Glucans biosynthesis protein C from Salmonella choleraesuis (strain SC-B67).